We begin with the raw amino-acid sequence, 437 residues long: Proton/glutamate-aspartate symporter (437 aa).

At 1 to 5 (MKNIK) the chain is on the cytoplasmic side. A helical transmembrane segment spans residues 6 to 26 (FSLAWQILFAMVLGILLGSYL). Topologically, residues 27–50 (HYHSDSRDWLVVNLLSPAGDIFIH) are periplasmic. Residues 51-71 (LIKMIVVPIVISTLVVGIAGV) form a helical membrane-spanning segment. Over 72-84 (GDAKQLGRIGAKT) the chain is Cytoplasmic. The helical transmembrane segment at 85 to 105 (IIYFEVITTVAIILGITLANV) threads the bilayer. At 106–159 (FQPGAGVDMSQLATVDISKYQSTTEAVQSSSHGIMGTILSLVPTNIVASMAKGE) the chain is on the periplasmic side. A helical transmembrane segment spans residues 160 to 180 (MLPIIFFSVLFGLGLSSLPAT). Topologically, residues 181 to 210 (HREPLVTVFRSISETMFKVTHMVMRYAPVG) are cytoplasmic. Residues 211 to 231 (VFALIAVTVANFGFSSLWPLA) form a helical membrane-spanning segment. Residue Lys232 is a topological domain, periplasmic. The helical transmembrane segment at 233–253 (LVLLVHFAILFFALVVLGIVA) threads the bilayer. Residues 254–292 (RLCGLSVWILIRILKDELILAYSTASSESVLPRIIEKME) lie on the Cytoplasmic side of the membrane. A helical transmembrane segment spans residues 293-313 (AYGAPVSITSFVVPTGYSFNL). Residues 314–324 (DGSTLYQSIAA) lie on the Periplasmic side of the membrane. The chain crosses the membrane as a helical span at residues 325-345 (IFIAQLYGIDLSIWQEIILVL). The Cytoplasmic segment spans residues 346 to 361 (TLMVTSKGIAGVPGVS). Residues 362-382 (FVVLLATLGSVGIPLEGLAFI) traverse the membrane as a helical segment. The Periplasmic portion of the chain corresponds to 383 to 387 (AGVDR). The chain crosses the membrane as a helical span at residues 388 to 408 (ILDMARTALNVVGNALAVLVI). Topologically, residues 409–437 (AKWEHKFDRKKALAYEREVLGKFDKTADQ) are cytoplasmic.

It belongs to the dicarboxylate/amino acid:cation symporter (DAACS) (TC 2.A.23) family. GltP subfamily.

The protein resides in the cell inner membrane. Its activity is regulated as follows. Glutamate uptake is inhibited by L-cysteate and beta-hydroxyaspartate. Inhibited by the uncoupler carbonylcyanide m-chlorophenylhydrazone (CCCP). Catalyzes the proton-dependent, binding-protein-independent transport of glutamate and aspartate. This chain is Proton/glutamate-aspartate symporter, found in Escherichia coli (strain K12).